We begin with the raw amino-acid sequence, 88 residues long: Small ribosomal subunit protein bS18B (88 aa).

This sequence belongs to the bacterial ribosomal protein bS18 family. Part of the 30S ribosomal subunit. Forms a tight heterodimer with protein bS6.

Binds as a heterodimer with protein bS6 to the central domain of the 16S rRNA, where it helps stabilize the platform of the 30S subunit. The polypeptide is Small ribosomal subunit protein bS18B (rpsR2) (Mycobacterium bovis (strain ATCC BAA-935 / AF2122/97)).